A 556-amino-acid polypeptide reads, in one-letter code: Guanosine-diphosphatase (556 aa).

At 1–12 the chain is on the cytoplasmic side; the sequence is MTPTMKSIARRK. Residues 13–33 form a helical; Signal-anchor for type II membrane protein membrane-spanning segment; sequence ALLIALSIFAVTFILWNGFPG. Residues 34 to 556 are Lumenal-facing; the sequence is SSNRPLPSSN…GWNCNVKEEI (523 aa). The Proton acceptor role is filled by E256. The N-linked (GlcNAc...) asparagine glycan is linked to N372.

It belongs to the GDA1/CD39 NTPase family. The cofactor is Ca(2+). Mn(2+) is required as a cofactor.

The protein resides in the golgi apparatus membrane. The enzyme catalyses GDP + H2O = GMP + phosphate + H(+). It participates in protein modification; protein glycosylation. Functionally, after transfer of sugars to endogenous macromolecular acceptors, the enzyme converts nucleoside diphosphates to nucleoside monophosphates which in turn exit the Golgi lumen in a coupled antiporter reaction, allowing entry of additional nucleotide sugar from the cytosol. In Schizosaccharomyces pombe (strain 972 / ATCC 24843) (Fission yeast), this protein is Guanosine-diphosphatase (gdp1).